Consider the following 1722-residue polypeptide: MSDPRPSQAEKHKLGRAASKFKDPSRAMQSDDYFARKFKAINGSMGPATLNTSSLSEGGGGGGGPANGTPAVPKMGVRARVSEWPPKKDCSKDLACKTLWESRSQSSYESATSIIQNGQNDQVDRQQEEQLDLDFVEAKYTIGDIFVHSPQRGLHPIRQRSNSDITISDIDTEDVLDQHAVNPNTGAALHREYGSTSSIDRQGLSGENVFAMLRGYRIESYDPKVTSSFGFPDFFPCDTAISPSLHAAAQISRGEFVRISGLDYMDGGLLMGRDRDKPFKRRLKSESVETSLFRKLRTVKSEHETFKFTSDLEEGRLDRGIRPWSCQRCFAHYDVQSILFNINEAMATRASVGKRKNITTGASAASQTPVPVGPAGGCESPLGSKEDLNAKENPDADEGDGKSNDLVLSCPYFRNETGGEGDRRIALSRANSASFSSGESCSFESSLSSHCTNAGVSVLEVPRENQPIHREKVKRYIIEHVDLGAYYYRKFFYGKEHQNYFGIDENLGPVAVSIRREKVEDPREKEGSQFNYRVAFRTSELTTLRGAILEDAVPSTARHGTARGLPLKEVLEYVIPELSIPCLRQAANSPKVPEQLLKLDEQGLSFQHKIGILYCKAGQSTEEEMYNNETAGPAFEEFLDLLGQRVRLKGFSKYRAQLDNKTDSTGTHSLYTTYKDFELMFHVSTLLPYMPNNRQQLLRKRHIGNDIVTIVFQEPGALPFTPKNIRSHFQHVFVIVKVHNPCTENVCYSVGVFRSKDVPPFVPPIPKGVTFPRTGVFRDFLLAKGINAENAAHKSEKFRAMATRTRHEYLKDLAENFVTTTTVDTSAKFSFITLGAKKKERVKPRTDAHLFSIGAIMWHVVARYFGQSADIECLLGISNEFIMLIEKESKNVAFNCSCRDVIGWTSGLVSIKIFYERGECILLSSVDNSSEDIREIVQRLVIVTRGCETVEMTLRRNGLGQLGFHVNFEGIVADVEPFGFAWKAGLRQGSRLVEICKVAVATLTHEQMIDLLRTSVTVKVVIIQPHEDGSPRRGCSELCRIPMVEYKLDSEGTPCEYKTPFRRNTTWHRVPTPALQPVSRASPVPGTPDRLQCQPLLQQAQAAIPRSTSFDRKLPDGTRSSPSNQSSSSDPGPGGSGPWRPQVGYDGCPSPLLLEPQGPGSVECDGSGDHEDLMEVGRLPETKWHGPPSKVLSSYKERALQKDGSCKDSPNKLSHIGDKSCSSHSSSNTLSSNTSSNSDDKHFGSGDLMDPELLGLTYIKGASTDSGIDTTPCMPATILGPMHLTGSRSLIHSRAEQWADAADVSGADEDPAKMYTLHGYASAISSSAADGSMGDLSEVSSHSSGSHRSGSPSTHCSKSTGSLDSSKVYIVTHSGGQQVPGAVAKPYHRQGAANKYVIGWKKSEGSPPPEEPEVTECPRIYGEMDIMSTASQHPAVVGDSVPEAQHVLSKDDFLKLMLPDSPLVEEGRRKFSFYGNLSPRRSLYRTLSDESVCSNRRGSSFASSRSSILDQALPNDILFSTTPPYHSTLPPRTHPAPSMGSLRNEFWFSDGSLSDKSKCADPGLMPLPDTAAGLDWSHLVDAARAFEGLDSDEELGLLCHHASYLDQRVASFCTLTDLQHGQELEGAPELSLCVDPTSGKEFMDTPGERSPSTLTGKVNQLELILRQLQTDLRKEKQDKAVLQAEVQHLRQDNMRLQEESQTATAQLRTFTEWFFSTIDKKV.

2 disordered regions span residues 1-29 and 45-73; these read MSDP…RAMQ and MGPA…PAVP. Gly residues predominate over residues 57 to 66; that stretch reads EGGGGGGGPA. Ser149, Ser380, and Ser384 each carry phosphoserine. The segment at 362–404 is disordered; that stretch reads ASAASQTPVPVGPAGGCESPLGSKEDLNAKENPDADEGDGKSN. The span at 384–403 shows a compositional bias: basic and acidic residues; sequence SKEDLNAKENPDADEGDGKS. Positions 596 to 813 constitute a Rap-GAP domain; it reads LLKLDEQGLS…RTRHEYLKDL (218 aa). A PDZ domain is found at 951-1027; that stretch reads EMTLRRNGLG…VKVVIIQPHE (77 aa). At Ser1030 the chain carries Phosphoserine. Disordered regions lie at residues 1068–1172, 1197–1246, and 1328–1361; these read HRVP…DHED, ERAL…FGSG, and AADG…KSTG. Composition is skewed to low complexity over residues 1091-1103 and 1120-1131; these read LQCQ…AQAA and SSPSNQSSSSDP. Residues 1197 to 1218 show a composition bias toward basic and acidic residues; it reads ERALQKDGSCKDSPNKLSHIGD. Residues 1220 to 1237 show a composition bias toward low complexity; sequence SCSSHSSSNTLSSNTSSN. Ser1245 is modified (phosphoserine). Positions 1328–1355 are enriched in low complexity; the sequence is AADGSMGDLSEVSSHSSGSHRSGSPSTH. Ser1461, Ser1472, Ser1478, Ser1488, Ser1549, Ser1552, and Ser1591 each carry phosphoserine. The stretch at 1652 to 1712 forms a coiled coil; the sequence is STLTGKVNQL…ATAQLRTFTE (61 aa).

This is Signal-induced proliferation-associated 1-like protein 2 (Sipa1l2) from Rattus norvegicus (Rat).